The sequence spans 89 residues: Small ribosomal subunit protein uS15 (89 aa).

The protein belongs to the universal ribosomal protein uS15 family. As to quaternary structure, part of the 30S ribosomal subunit. Forms a bridge to the 50S subunit in the 70S ribosome, contacting the 23S rRNA.

Functionally, one of the primary rRNA binding proteins, it binds directly to 16S rRNA where it helps nucleate assembly of the platform of the 30S subunit by binding and bridging several RNA helices of the 16S rRNA. Its function is as follows. Forms an intersubunit bridge (bridge B4) with the 23S rRNA of the 50S subunit in the ribosome. The protein is Small ribosomal subunit protein uS15 of Lactobacillus helveticus (strain DPC 4571).